The following is a 301-amino-acid chain: Heme A synthase (301 aa).

Residues methionine 1–leucine 5 lie on the Cytoplasmic side of the membrane. The chain crosses the membrane as a helical span at residues alanine 6–valine 26. The Extracellular segment spans residues threonine 27–arginine 62. A disulfide bridge links cysteine 35 with cysteine 42. Glutamate 58 is an active-site residue. Histidine 61 serves as a coordination point for heme o. The chain crosses the membrane as a helical span at residues valine 63–valine 83. Residues lysine 84–lysine 90 lie on the Cytoplasmic side of the membrane. Residues isoleucine 91–valine 111 form a helical membrane-spanning segment. Residues isoleucine 112–alanine 121 are Extracellular-facing. Residues leucine 122–phenylalanine 142 form a helical membrane-spanning segment. Histidine 123 provides a ligand contact to heme o. Residues glutamate 143 to histidine 158 lie on the Cytoplasmic side of the membrane. Residues leucine 159–leucine 179 form a helical membrane-spanning segment. At glycine 180 to glutamine 203 the chain is on the extracellular side. The cysteines at positions 185 and 191 are disulfide-linked. The helical transmembrane segment at methionine 204–alanine 224 threads the bilayer. Histidine 206 is a heme b binding site. Residues arginine 225 to arginine 234 lie on the Cytoplasmic side of the membrane. The chain crosses the membrane as a helical span at residues glycine 235 to leucine 255. The Extracellular segment spans residues glycine 256–alanine 259. The chain crosses the membrane as a helical span at residues threonine 260–leucine 280. Histidine 266 lines the heme b pocket. At serine 281–glycine 301 the chain is on the cytoplasmic side.

The protein belongs to the COX15/CtaA family. Type 1 subfamily. Interacts with CtaB. Heme b is required as a cofactor.

It is found in the cell membrane. It carries out the reaction Fe(II)-heme o + 2 A + H2O = Fe(II)-heme a + 2 AH2. Its pathway is porphyrin-containing compound metabolism; heme A biosynthesis; heme A from heme O: step 1/1. Catalyzes the conversion of heme O to heme A by two successive hydroxylations of the methyl group at C8. The first hydroxylation forms heme I, the second hydroxylation results in an unstable dihydroxymethyl group, which spontaneously dehydrates, resulting in the formyl group of heme A. In Exiguobacterium sp. (strain ATCC BAA-1283 / AT1b), this protein is Heme A synthase.